The chain runs to 115 residues: Putative HNH nuclease YajD (115 aa).

The region spanning 27-75 (CGRCSREFVYSNLRELTVHHIDHDHTNNPEDGSNWELLCLYCHDHEHSK) is the HNH domain.

This sequence belongs to the HNH nuclease family.

The polypeptide is Putative HNH nuclease YajD (yajD) (Escherichia coli O157:H7).